A 288-amino-acid polypeptide reads, in one-letter code: MPELPEVEVVRRGLEEHLVGRRFTDVQVCHPRAVRSGEPEVLVSSLRDATVTAVKRRGKFLWLDFGEDFLLQVHLGMSGQMLVAEPGQVQSPHVRIRAGLSDGRELCFVDQRTFGEWRLEKAVPDPWAAGAGVASPKNFLPQNVSHIAADPLEAVFDAQAAVARMKSKRAAVKTVLLNQEVVSGIGNIYADEALFLAGVRPRRSAALLSRPTLHRVLQSAAEVMECALEQGGTSFDSLYVNVNGASGYFSRSLNVYGRGGEPCKRCGAPIKRVVVGGRSTHYCATCQR.

Pro-2 functions as the Schiff-base intermediate with DNA in the catalytic mechanism. The active-site Proton donor is Glu-3. Lys-59 functions as the Proton donor; for beta-elimination activity in the catalytic mechanism. Residues His-93, Arg-112, and Lys-168 each coordinate DNA. The segment at 254 to 288 (NVYGRGGEPCKRCGAPIKRVVVGGRSTHYCATCQR) adopts an FPG-type zinc-finger fold. The active-site Proton donor; for delta-elimination activity is Arg-278.

This sequence belongs to the FPG family. In terms of assembly, monomer. The cofactor is Zn(2+).

The catalysed reaction is Hydrolysis of DNA containing ring-opened 7-methylguanine residues, releasing 2,6-diamino-4-hydroxy-5-(N-methyl)formamidopyrimidine.. The enzyme catalyses 2'-deoxyribonucleotide-(2'-deoxyribose 5'-phosphate)-2'-deoxyribonucleotide-DNA = a 3'-end 2'-deoxyribonucleotide-(2,3-dehydro-2,3-deoxyribose 5'-phosphate)-DNA + a 5'-end 5'-phospho-2'-deoxyribonucleoside-DNA + H(+). Functionally, involved in base excision repair of DNA damaged by oxidation or by mutagenic agents. Acts as a DNA glycosylase that recognizes and removes damaged bases. Has a preference for oxidized purines, such as 7,8-dihydro-8-oxoguanine (8-oxoG). Has AP (apurinic/apyrimidinic) lyase activity and introduces nicks in the DNA strand. Cleaves the DNA backbone by beta-delta elimination to generate a single-strand break at the site of the removed base with both 3'- and 5'-phosphates. In Corynebacterium jeikeium (strain K411), this protein is Formamidopyrimidine-DNA glycosylase.